The sequence spans 671 residues: tRNA(Met) cytidine acetyltransferase TmcA (671 aa).

Residues glutamine 180, 202–211, and arginine 319 contribute to the ATP site; that span reads GRGKSALAGQ. The N-acetyltransferase domain maps to 356 to 531; it reads QTLWRSEPET…SGCYTAMALL (176 aa). Acetyl-CoA contacts are provided by residues 461–463, 468–474, glutamate 499, and arginine 506; these read IAV and QREGTGR.

The protein belongs to the RNA cytidine acetyltransferase family. TmcA subfamily.

It is found in the cytoplasm. It carries out the reaction cytidine(34) in elongator tRNA(Met) + acetyl-CoA + ATP + H2O = N(4)-acetylcytidine(34) in elongator tRNA(Met) + ADP + phosphate + CoA + H(+). In terms of biological role, catalyzes the formation of N(4)-acetylcytidine (ac(4)C) at the wobble position of tRNA(Met), by using acetyl-CoA as an acetyl donor and ATP (or GTP). In Shigella flexneri serotype 5b (strain 8401), this protein is tRNA(Met) cytidine acetyltransferase TmcA.